Consider the following 78-residue polypeptide: Large ribosomal subunit protein bL28 (78 aa).

This sequence belongs to the bacterial ribosomal protein bL28 family.

In Prochlorococcus marinus (strain MIT 9301), this protein is Large ribosomal subunit protein bL28.